Here is a 234-residue protein sequence, read N- to C-terminus: Glutathione S-transferase 1 (234 aa).

Residues 3–90 form the GST N-terminal domain; sequence LPIIKVHWLD…YVLQHFDHSH (88 aa). Residues 96–234 enclose the GST C-terminal domain; it reads DADIADQINY…EKARALGSNF (139 aa).

The protein belongs to the GST superfamily. As to quaternary structure, homodimer.

The protein localises to the endoplasmic reticulum membrane. The catalysed reaction is RX + glutathione = an S-substituted glutathione + a halide anion + H(+). In Saccharomyces cerevisiae (strain ATCC 204508 / S288c) (Baker's yeast), this protein is Glutathione S-transferase 1 (GTT1).